Reading from the N-terminus, the 149-residue chain is Macrodomain Ter protein (149 aa).

The protein belongs to the MatP family. As to quaternary structure, homodimer.

The protein resides in the cytoplasm. In terms of biological role, required for spatial organization of the terminus region of the chromosome (Ter macrodomain) during the cell cycle. Prevents early segregation of duplicated Ter macrodomains during cell division. Binds specifically to matS, which is a 13 bp signature motif repeated within the Ter macrodomain. This chain is Macrodomain Ter protein, found in Vibrio vulnificus (strain YJ016).